We begin with the raw amino-acid sequence, 373 residues long: Indole glucosinolate O-methyltransferase 3 (373 aa).

The S-adenosyl-L-homocysteine site is built by glycine 217, aspartate 240, aspartate 260, methionine 261, and lysine 274. Residue histidine 278 is the Proton acceptor of the active site.

This sequence belongs to the class I-like SAM-binding methyltransferase superfamily. Cation-independent O-methyltransferase family.

It participates in secondary metabolite biosynthesis. Its function is as follows. Involved in indole glucosinolate biosynthesis. Catalyzes methoxylation reactions of the glucosinolate indole ring. Converts the hydroxy intermediates 4-hydroxy-indol-3-yl-methylglucosinolate (4OH-I3M) and 1-hydroxy-indol-3-yl-methylglucosinolate (1OH-I3M) to 4-methoxy-indol-3-yl-methylglucosinolate (4MO-I3M) and 1-methoxy-indol-3-yl-methylglucosinolate(1MO-I3M), respectively. The polypeptide is Indole glucosinolate O-methyltransferase 3 (Arabidopsis thaliana (Mouse-ear cress)).